The following is a 252-amino-acid chain: Flagellar brake protein YcgR (252 aa).

The PilZ domain maps to Q123–T238.

It belongs to the YcgR family. Monomer. Interacts with the flagellar basal bodies.

The protein localises to the bacterial flagellum basal body. In terms of biological role, acts as a flagellar brake, regulating swimming and swarming in a bis-(3'-5') cyclic diguanylic acid (c-di-GMP)-dependent manner. Binds 1 c-di-GMP dimer per subunit. Increasing levels of c-di-GMP lead to decreased motility. The polypeptide is Flagellar brake protein YcgR (Janthinobacterium sp. (strain Marseille) (Minibacterium massiliensis)).